The sequence spans 501 residues: Pyruvate kinase (501 aa).

Position 50 (arginine 50) interacts with substrate. Residues asparagine 52, serine 54, aspartate 85, and threonine 86 each contribute to the K(+) site. 52 to 55 contacts ATP; it reads NFSH. ATP contacts are provided by arginine 92 and lysine 178. Position 243 (glutamate 243) interacts with Mg(2+). Substrate is bound by residues glycine 266, aspartate 267, and threonine 299. Aspartate 267 contributes to the Mg(2+) binding site.

Belongs to the pyruvate kinase family. As to quaternary structure, homotetramer. The cofactor is Mg(2+). Requires K(+) as cofactor.

The enzyme catalyses pyruvate + ATP = phosphoenolpyruvate + ADP + H(+). Its pathway is carbohydrate degradation; glycolysis; pyruvate from D-glyceraldehyde 3-phosphate: step 5/5. The chain is Pyruvate kinase (PYK1) from Naumovozyma castellii (Yeast).